We begin with the raw amino-acid sequence, 410 residues long: Argininosuccinate synthase (410 aa).

An ATP-binding site is contributed by 10–18; sequence AYSGGLDTS. Residues Tyr-88 and Ser-93 each coordinate L-citrulline. Gly-118 serves as a coordination point for ATP. Positions 120, 124, and 125 each coordinate L-aspartate. Asn-124 contacts L-citrulline. L-citrulline is bound by residues Arg-128, Ser-177, Ser-186, Glu-262, and Tyr-274.

It belongs to the argininosuccinate synthase family. Type 1 subfamily. In terms of assembly, homotetramer.

The protein resides in the cytoplasm. The catalysed reaction is L-citrulline + L-aspartate + ATP = 2-(N(omega)-L-arginino)succinate + AMP + diphosphate + H(+). It participates in amino-acid biosynthesis; L-arginine biosynthesis; L-arginine from L-ornithine and carbamoyl phosphate: step 2/3. The chain is Argininosuccinate synthase from Caldanaerobacter subterraneus subsp. tengcongensis (strain DSM 15242 / JCM 11007 / NBRC 100824 / MB4) (Thermoanaerobacter tengcongensis).